Consider the following 116-residue polypeptide: Ribonuclease P protein component (116 aa).

The protein belongs to the RnpA family. As to quaternary structure, consists of a catalytic RNA component (M1 or rnpB) and a protein subunit.

The catalysed reaction is Endonucleolytic cleavage of RNA, removing 5'-extranucleotides from tRNA precursor.. RNaseP catalyzes the removal of the 5'-leader sequence from pre-tRNA to produce the mature 5'-terminus. It can also cleave other RNA substrates such as 4.5S RNA. The protein component plays an auxiliary but essential role in vivo by binding to the 5'-leader sequence and broadening the substrate specificity of the ribozyme. In Acholeplasma laidlawii (strain PG-8A), this protein is Ribonuclease P protein component.